We begin with the raw amino-acid sequence, 266 residues long: 5'-nucleotidase SurE (266 aa).

Asp-8, Asp-9, Ser-39, and Asn-95 together coordinate a divalent metal cation.

It belongs to the SurE nucleotidase family. Requires a divalent metal cation as cofactor.

Its subcellular location is the cytoplasm. It catalyses the reaction a ribonucleoside 5'-phosphate + H2O = a ribonucleoside + phosphate. In terms of biological role, nucleotidase that shows phosphatase activity on nucleoside 5'-monophosphates. The polypeptide is 5'-nucleotidase SurE (Syntrophus aciditrophicus (strain SB)).